The sequence spans 127 residues: Aspartate 1-decarboxylase (127 aa).

Catalysis depends on serine 25, which acts as the Schiff-base intermediate with substrate; via pyruvic acid. The residue at position 25 (serine 25) is a Pyruvic acid (Ser). Residue threonine 57 coordinates substrate. Residue tyrosine 58 is the Proton donor of the active site. 73–75 (GAA) is a binding site for substrate.

Belongs to the PanD family. As to quaternary structure, heterooctamer of four alpha and four beta subunits. The cofactor is pyruvate. Is synthesized initially as an inactive proenzyme, which is activated by self-cleavage at a specific serine bond to produce a beta-subunit with a hydroxyl group at its C-terminus and an alpha-subunit with a pyruvoyl group at its N-terminus.

It is found in the cytoplasm. The catalysed reaction is L-aspartate + H(+) = beta-alanine + CO2. Its pathway is cofactor biosynthesis; (R)-pantothenate biosynthesis; beta-alanine from L-aspartate: step 1/1. In terms of biological role, catalyzes the pyruvoyl-dependent decarboxylation of aspartate to produce beta-alanine. This chain is Aspartate 1-decarboxylase, found in Bacillus velezensis (strain DSM 23117 / BGSC 10A6 / LMG 26770 / FZB42) (Bacillus amyloliquefaciens subsp. plantarum).